A 141-amino-acid polypeptide reads, in one-letter code: Large ribosomal subunit protein uL16 (141 aa).

Belongs to the universal ribosomal protein uL16 family. As to quaternary structure, part of the 50S ribosomal subunit.

Its function is as follows. Binds 23S rRNA and is also seen to make contacts with the A and possibly P site tRNAs. The polypeptide is Large ribosomal subunit protein uL16 (Microchaete diplosiphon (Fremyella diplosiphon)).